The chain runs to 130 residues: Large ribosomal subunit protein bL31c (130 aa).

The N-terminal 36 residues, 1–36, are a transit peptide targeting the chloroplast; it reads MVLTLSNQFLAKIPATPKTLTLPKTSSSTLRPQWSC.

It belongs to the bacterial ribosomal protein bL31 family. Type A subfamily. Component of the chloroplast large ribosomal subunit (LSU). Mature 70S chloroplast ribosomes of higher plants consist of a small (30S) and a large (50S) subunit. The 30S small subunit contains 1 molecule of ribosomal RNA (16S rRNA) and 24 different proteins. The 50S large subunit contains 3 rRNA molecules (23S, 5S and 4.5S rRNA) and 33 different proteins.

It localises to the plastid. Its subcellular location is the chloroplast. Component of the chloroplast ribosome (chloro-ribosome), a dedicated translation machinery responsible for the synthesis of chloroplast genome-encoded proteins, including proteins of the transcription and translation machinery and components of the photosynthetic apparatus. In Spinacia oleracea (Spinach), this protein is Large ribosomal subunit protein bL31c (RPL31).